A 206-amino-acid chain; its full sequence is Octanoyltransferase (206 aa).

The BPL/LPL catalytic domain maps to 30–206 (PETNDEIWLV…EFVTLLNNSI (177 aa)). Substrate contacts are provided by residues 69–76 (RGGQVTYH), 137–139 (SLG), and 150–152 (GIA). Residue cysteine 168 is the Acyl-thioester intermediate of the active site.

This sequence belongs to the LipB family.

It localises to the cytoplasm. It carries out the reaction octanoyl-[ACP] + L-lysyl-[protein] = N(6)-octanoyl-L-lysyl-[protein] + holo-[ACP] + H(+). The protein operates within protein modification; protein lipoylation via endogenous pathway; protein N(6)-(lipoyl)lysine from octanoyl-[acyl-carrier-protein]: step 1/2. Its function is as follows. Catalyzes the transfer of endogenously produced octanoic acid from octanoyl-acyl-carrier-protein onto the lipoyl domains of lipoate-dependent enzymes. Lipoyl-ACP can also act as a substrate although octanoyl-ACP is likely to be the physiological substrate. This is Octanoyltransferase from Francisella tularensis subsp. novicida (strain U112).